Reading from the N-terminus, the 103-residue chain is MSGRGKGGKGLGKGGAKRHRKILRDNIQGITKPAIRRLARRGGVKRISALIYEETRSVLKTFLESVIRDAVTYTEHAKRKTVTSLDVVYALKRQGRTLYGFGG.

K6 carries the N6-acetyl-N6-methyllysine; alternate modification. An N6-methyllysine; alternate mark is found at K6, K9, and K13. Position 13 is an N6-acetyl-N6-methyllysine; alternate (K13). Residues 17–21 (KRHRK) mediate DNA binding. Residue K92 is modified to N6-glutaryllysine.

Belongs to the histone H4 family. In terms of assembly, the nucleosome is a histone octamer containing two molecules each of H2A, H2B, H3 and H4 assembled in one H3-H4 heterotetramer and two H2A-H2B heterodimers. The octamer wraps approximately 147 bp of DNA. Glutarylation at Lys-92 (H4K91glu) destabilizes nucleosomes by promoting dissociation of the H2A-H2B dimers from nucleosomes.

The protein localises to the nucleus. The protein resides in the chromosome. In terms of biological role, core component of nucleosome. Nucleosomes wrap and compact DNA into chromatin, limiting DNA accessibility to the cellular machineries which require DNA as a template. Histones thereby play a central role in transcription regulation, DNA repair, DNA replication and chromosomal stability. DNA accessibility is regulated via a complex set of post-translational modifications of histones, also called histone code, and nucleosome remodeling. The sequence is that of Histone H4 (ahsb4) from Blastobotrys adeninivorans (Yeast).